Reading from the N-terminus, the 434-residue chain is Serine--tRNA ligase (434 aa).

239 to 241 (TAE) provides a ligand contact to L-serine. 270 to 272 (RSE) contributes to the ATP binding site. Glu-293 contributes to the L-serine binding site. An ATP-binding site is contributed by 357–360 (EISS). Ser-392 is a binding site for L-serine.

The protein belongs to the class-II aminoacyl-tRNA synthetase family. Type-1 seryl-tRNA synthetase subfamily. Homodimer. The tRNA molecule binds across the dimer.

The protein localises to the cytoplasm. The catalysed reaction is tRNA(Ser) + L-serine + ATP = L-seryl-tRNA(Ser) + AMP + diphosphate + H(+). The enzyme catalyses tRNA(Sec) + L-serine + ATP = L-seryl-tRNA(Sec) + AMP + diphosphate + H(+). Its pathway is aminoacyl-tRNA biosynthesis; selenocysteinyl-tRNA(Sec) biosynthesis; L-seryl-tRNA(Sec) from L-serine and tRNA(Sec): step 1/1. Its function is as follows. Catalyzes the attachment of serine to tRNA(Ser). Is also able to aminoacylate tRNA(Sec) with serine, to form the misacylated tRNA L-seryl-tRNA(Sec), which will be further converted into selenocysteinyl-tRNA(Sec). This chain is Serine--tRNA ligase, found in Cupriavidus taiwanensis (strain DSM 17343 / BCRC 17206 / CCUG 44338 / CIP 107171 / LMG 19424 / R1) (Ralstonia taiwanensis (strain LMG 19424)).